A 614-amino-acid polypeptide reads, in one-letter code: DNA mismatch repair protein MutL (614 aa).

Residues 355 to 411 (PLSTGRVSEADPSNYATQSKFDEKPRESGSQGQSSSISAPSSYSRGGEYSARSQPEL) form a disordered region. Over residues 382 to 401 (SGSQGQSSSISAPSSYSRGG) the composition is skewed to low complexity.

Belongs to the DNA mismatch repair MutL/HexB family.

Functionally, this protein is involved in the repair of mismatches in DNA. It is required for dam-dependent methyl-directed DNA mismatch repair. May act as a 'molecular matchmaker', a protein that promotes the formation of a stable complex between two or more DNA-binding proteins in an ATP-dependent manner without itself being part of a final effector complex. This is DNA mismatch repair protein MutL from Shewanella woodyi (strain ATCC 51908 / MS32).